The chain runs to 508 residues: Light-independent protochlorophyllide reductase subunit B (508 aa).

Position 36 (Asp36) interacts with [4Fe-4S] cluster. Asp294 acts as the Proton donor in catalysis. Residue 429–430 (GM) participates in substrate binding.

The protein belongs to the ChlB/BchB/BchZ family. As to quaternary structure, protochlorophyllide reductase is composed of three subunits; ChlL, ChlN and ChlB. Forms a heterotetramer of two ChlB and two ChlN subunits. Requires [4Fe-4S] cluster as cofactor.

It carries out the reaction chlorophyllide a + oxidized 2[4Fe-4S]-[ferredoxin] + 2 ADP + 2 phosphate = protochlorophyllide a + reduced 2[4Fe-4S]-[ferredoxin] + 2 ATP + 2 H2O. It functions in the pathway porphyrin-containing compound metabolism; chlorophyll biosynthesis (light-independent). In terms of biological role, component of the dark-operative protochlorophyllide reductase (DPOR) that uses Mg-ATP and reduced ferredoxin to reduce ring D of protochlorophyllide (Pchlide) to form chlorophyllide a (Chlide). This reaction is light-independent. The NB-protein (ChlN-ChlB) is the catalytic component of the complex. The polypeptide is Light-independent protochlorophyllide reductase subunit B (Crocosphaera subtropica (strain ATCC 51142 / BH68) (Cyanothece sp. (strain ATCC 51142))).